The following is a 374-amino-acid chain: Pectate lyase 1 (374 aa).

Residues 1–21 form the signal peptide; that stretch reads MDSPCLVALLVFSFVIGSCFS. 2 disulfides stabilise this stretch: Cys-28/Cys-45 and Cys-128/Cys-147. A glycan (N-linked (GlcNAc...) asparagine) is linked at Asn-158. Residue Asp-170 coordinates Ca(2+). Asn-191 carries N-linked (GlcNAc...) (complex) asparagine glycosylation. 2 residues coordinate Ca(2+): Asp-194 and Asp-198. Residue Arg-250 is part of the active site. Asn-293 carries N-linked (GlcNAc...) asparagine glycosylation. Cysteines 306 and 312 form a disulfide. An N-linked (GlcNAc...) (complex) asparagine glycan is attached at Asn-354.

It belongs to the polysaccharide lyase 1 family. Amb a subfamily. It depends on Ca(2+) as a cofactor. Post-translationally, N-glycosylated; contains fucose and xylose.

It carries out the reaction Eliminative cleavage of (1-&gt;4)-alpha-D-galacturonan to give oligosaccharides with 4-deoxy-alpha-D-galact-4-enuronosyl groups at their non-reducing ends.. It functions in the pathway glycan metabolism; pectin degradation; 2-dehydro-3-deoxy-D-gluconate from pectin: step 2/5. In terms of biological role, has pectate lyase activity. The protein is Pectate lyase 1 of Cryptomeria japonica (Japanese cedar).